A 126-amino-acid chain; its full sequence is Holo-[acyl-carrier-protein] synthase (126 aa).

Residues Asp9 and Glu58 each contribute to the Mg(2+) site.

It belongs to the P-Pant transferase superfamily. AcpS family. It depends on Mg(2+) as a cofactor.

The protein resides in the cytoplasm. The enzyme catalyses apo-[ACP] + CoA = holo-[ACP] + adenosine 3',5'-bisphosphate + H(+). Its function is as follows. Transfers the 4'-phosphopantetheine moiety from coenzyme A to a Ser of acyl-carrier-protein. This Shewanella denitrificans (strain OS217 / ATCC BAA-1090 / DSM 15013) protein is Holo-[acyl-carrier-protein] synthase.